The chain runs to 293 residues: Ribosomal protein L11 methyltransferase (293 aa).

S-adenosyl-L-methionine-binding residues include threonine 145, glycine 166, aspartate 188, and asparagine 230.

This sequence belongs to the methyltransferase superfamily. PrmA family.

Its subcellular location is the cytoplasm. It catalyses the reaction L-lysyl-[protein] + 3 S-adenosyl-L-methionine = N(6),N(6),N(6)-trimethyl-L-lysyl-[protein] + 3 S-adenosyl-L-homocysteine + 3 H(+). In terms of biological role, methylates ribosomal protein L11. This chain is Ribosomal protein L11 methyltransferase, found in Shewanella baltica (strain OS185).